A 356-amino-acid polypeptide reads, in one-letter code: Alpha-N-acetylneuraminide alpha-2,8-sialyltransferase (356 aa).

Over 1 to 29 (MSPCGRARRHTSRGAMAVLAWKFPRTRLP) the chain is Cytoplasmic. The chain crosses the membrane as a helical; Signal-anchor for type II membrane protein span at residues 30 to 48 (VGASALCVVVLCWLYVFPV). Topologically, residues 49 to 356 (YRLPDEKEIV…CEDNSLQPTS (308 aa)) are lumenal. N-linked (GlcNAc...) asparagine glycans are attached at residues Asn-71 and Asn-119. Cysteines 138 and 287 form a disulfide. Residues Asn-143 and Asn-166 each coordinate CMP-N-acetyl-beta-neuraminate. Asn-214 and Asn-245 each carry an N-linked (GlcNAc...) asparagine glycan. CMP-N-acetyl-beta-neuraminate contacts are provided by Ser-274, Thr-275, Gly-276, Trp-296, and His-310.

Belongs to the glycosyltransferase 29 family.

Its subcellular location is the golgi apparatus membrane. It catalyses the reaction an N-acetyl-alpha-neuraminyl-(2-&gt;3)-beta-D-galactosyl derivative + CMP-N-acetyl-beta-neuraminate = an N-acetyl-alpha-neuraminyl-(2-&gt;8)-N-acetyl-alpha-neuraminyl-(2-&gt;3)-beta-D-galactosyl derivative + CMP + H(+). It carries out the reaction a ganglioside GM3 (d18:1(4E)) + CMP-N-acetyl-beta-neuraminate = a ganglioside GD3 (d18:1(4E)) + CMP + H(+). The catalysed reaction is a ganglioside GD3 (d18:1(4E)) + CMP-N-acetyl-beta-neuraminate = a ganglioside GT3 (d18:1(4E)) + CMP + H(+). The enzyme catalyses a ganglioside GD1a (d18:1(4E)) + CMP-N-acetyl-beta-neuraminate = a ganglioside GT1a (d18:1(4E)) + CMP + H(+). It catalyses the reaction a ganglioside GT1b (d18:1(4E)) + CMP-N-acetyl-beta-neuraminate = a ganglioside GQ1b (d18:1(4E)) + CMP + H(+). It carries out the reaction a ganglioside GM1b (d18:1(4E)) + CMP-N-acetyl-beta-neuraminate = a ganglioside GD1c (d18:1(4E)) + CMP + H(+). The catalysed reaction is a ganglioside GD3 + CMP-N-acetyl-beta-neuraminate = a ganglioside GT3 + CMP + H(+). The enzyme catalyses [alpha-N-acetylneuraminyl-(2-&gt;8)](n)-alpha-N-acetylneuraminyl-(2-&gt;8)-alpha-N-acetylneuraminyl-(2-&gt;3)-beta-D-galactosyl-(1-&gt;4)-beta-D-glucosyl-(1&lt;-&gt;1)-ceramide + CMP-N-acetyl-beta-neuraminate = [alpha-N-acetylneuraminyl-(2-&gt;8)](n+1)-alpha-N-acetylneuraminyl-(2-&gt;8)-alpha-N-acetylneuraminyl-(2-&gt;3)-beta-D-galactosyl-(1-&gt;4)-beta-D-glucosyl-(1&lt;-&gt;1)-ceramide + CMP + H(+). It participates in protein modification; protein glycosylation. It functions in the pathway lipid metabolism; sphingolipid metabolism. Catalyzes the addition of sialic acid in alpha 2,8-linkage to the sialic acid moiety of the ganglioside GM3 to form ganglioside GD3; gangliosides are a subfamily of complex glycosphingolipds that contain one or more residues of sialic acid. Can catalyze the addition of a second alpha-2,8- sialic acid to GD3 to form GT3. Can use GM1b, GD1a and GT1b as acceptor substrates to synthesize GD1c, GT1a and GQ1b respectively. This Bos taurus (Bovine) protein is Alpha-N-acetylneuraminide alpha-2,8-sialyltransferase.